The chain runs to 415 residues: Histidine--tRNA ligase (415 aa).

It belongs to the class-II aminoacyl-tRNA synthetase family. As to quaternary structure, homodimer.

The protein resides in the cytoplasm. The enzyme catalyses tRNA(His) + L-histidine + ATP = L-histidyl-tRNA(His) + AMP + diphosphate + H(+). This Clostridium botulinum (strain Loch Maree / Type A3) protein is Histidine--tRNA ligase.